The sequence spans 322 residues: D-alanine--D-alanine ligase (322 aa).

One can recognise an ATP-grasp domain in the interval 110–310; that stretch reads KAVLAAAGIP…FDRLVFWIVE (201 aa). ATP is bound at residue 137–191; sequence MPPPYVVKPNAEGSSVGVSLVFEGANGPPRQLAAPDWAFGEQVMVEPYIPGLELA. Residues D263, E277, and N279 each coordinate Mg(2+).

The protein belongs to the D-alanine--D-alanine ligase family. It depends on Mg(2+) as a cofactor. Mn(2+) serves as cofactor.

Its subcellular location is the cytoplasm. The catalysed reaction is 2 D-alanine + ATP = D-alanyl-D-alanine + ADP + phosphate + H(+). Its pathway is cell wall biogenesis; peptidoglycan biosynthesis. Its function is as follows. Cell wall formation. The protein is D-alanine--D-alanine ligase of Caulobacter sp. (strain K31).